The primary structure comprises 265 residues: Formyltransferase/hydrolase complex Fhc subunit C (265 aa).

It belongs to the FwdC/FmdC family. In terms of assembly, octaheteromer. Part of the formyltransferase/hydrolase complex fhc; composed of FhcA, FhcB, FhcC and FhcD.

The protein localises to the cytoplasm. It functions in the pathway one-carbon metabolism; formaldehyde degradation; formate from formaldehyde (H(4)MPT route): step 4/5. Its function is as follows. Involved in the transformation of 5-formyl tetrahydromethanopterin (5-formyl-H(4)MPT) to methanofuran (MFR) and formate via the formylmethanofuran (formyl-MFR). This is Formyltransferase/hydrolase complex Fhc subunit C (fhcC) from Methylorubrum extorquens (strain ATCC 14718 / DSM 1338 / JCM 2805 / NCIMB 9133 / AM1) (Methylobacterium extorquens).